Reading from the N-terminus, the 634-residue chain is UPF0329 protein ECU07_1850/ECU10_0050 (634 aa).

Basic and acidic residues-rich tracts occupy residues arginine 354–glycine 365 and glycine 397–glutamate 407. A disordered region spans residues arginine 354 to glutamate 438. Residues glycine 408–glutamate 417 show a composition bias toward acidic residues.

It belongs to the UPF0329 family.

The protein is UPF0329 protein ECU07_1850/ECU10_0050 of Encephalitozoon cuniculi (strain GB-M1) (Microsporidian parasite).